The sequence spans 254 residues: rRNA N-glycosylase sapovaccarin-S1 (254 aa).

This sequence belongs to the ribosome-inactivating protein family. Type 1 RIP subfamily. In terms of tissue distribution, expressed in seeds; most abundant in the perisperm.

It catalyses the reaction Endohydrolysis of the N-glycosidic bond at one specific adenosine on the 28S rRNA.. Functionally, exhibits N-glycosylase activity. Catalyzes the release of one adenine from a ribosome. Acts as a ribosome-inactivating protein and inhibits protein synthesis in a rabbit-reticulocyte lysate system and in various cell lines (in vitro). Induces cell death in Huh-7 liver cells. May contribute to the protection against plant pests and predators or play a role in regulating the death of plant cells. This is rRNA N-glycosylase sapovaccarin-S1 from Gypsophila vaccaria (Cow soapwort).